Consider the following 293-residue polypeptide: 4-hydroxybenzoate octaprenyltransferase (293 aa).

Transmembrane regions (helical) follow at residues 19–39, 43–63, 95–115, 135–155, 158–178, 209–229, 231–251, and 266–286; these read PIGI…ASNG, WLIL…GCVV, LLAA…NALV, FFAI…PMSY, LWGE…FWAI, LTAI…VGAL, DFSG…VYHL, and FLHN…HFLL.

It belongs to the UbiA prenyltransferase family. The cofactor is Mg(2+).

It localises to the cell inner membrane. The enzyme catalyses all-trans-octaprenyl diphosphate + 4-hydroxybenzoate = 4-hydroxy-3-(all-trans-octaprenyl)benzoate + diphosphate. Its pathway is cofactor biosynthesis; ubiquinone biosynthesis. Its function is as follows. Catalyzes the prenylation of para-hydroxybenzoate (PHB) with an all-trans polyprenyl group. Mediates the second step in the final reaction sequence of ubiquinone-8 (UQ-8) biosynthesis, which is the condensation of the polyisoprenoid side chain with PHB, generating the first membrane-bound Q intermediate 3-octaprenyl-4-hydroxybenzoate. In Thiobacillus denitrificans (strain ATCC 25259 / T1), this protein is 4-hydroxybenzoate octaprenyltransferase.